Here is a 264-residue protein sequence, read N- to C-terminus: Glutamate racemase (264 aa).

Residues 10–11 and 42–43 contribute to the substrate site; these read DS and YG. C73 (proton donor/acceptor) is an active-site residue. 74–75 contributes to the substrate binding site; it reads NT. Catalysis depends on C183, which acts as the Proton donor/acceptor. 184–185 provides a ligand contact to substrate; it reads TH.

The protein belongs to the aspartate/glutamate racemases family.

It catalyses the reaction L-glutamate = D-glutamate. The protein operates within cell wall biogenesis; peptidoglycan biosynthesis. Provides the (R)-glutamate required for cell wall biosynthesis. The chain is Glutamate racemase from Streptococcus pyogenes serotype M2 (strain MGAS10270).